The primary structure comprises 296 residues: ATP synthase gamma chain (296 aa).

The interval 194 to 216 (IPASAGQAANDNAGSDQPAGDYE) is disordered.

The protein belongs to the ATPase gamma chain family. As to quaternary structure, F-type ATPases have 2 components, CF(1) - the catalytic core - and CF(0) - the membrane proton channel. CF(1) has five subunits: alpha(3), beta(3), gamma(1), delta(1), epsilon(1). CF(0) has three main subunits: a, b and c.

It localises to the cell inner membrane. Its function is as follows. Produces ATP from ADP in the presence of a proton gradient across the membrane. The gamma chain is believed to be important in regulating ATPase activity and the flow of protons through the CF(0) complex. The protein is ATP synthase gamma chain of Acidiphilium cryptum (strain JF-5).